We begin with the raw amino-acid sequence, 471 residues long: Ribulose bisphosphate carboxylase large chain (471 aa).

Substrate contacts are provided by Asn115 and Thr165. Catalysis depends on Lys167, which acts as the Proton acceptor. Lys169 is a binding site for substrate. Positions 193, 195, and 196 each coordinate Mg(2+). Lys193 carries the N6-carboxylysine modification. His286 functions as the Proton acceptor in the catalytic mechanism. Substrate contacts are provided by Arg287, His319, and Ser371.

This sequence belongs to the RuBisCO large chain family. Type I subfamily. Heterohexadecamer of 8 large chains and 8 small chains. Forms a CsoS2-CsoS1-RuBisCO complex. Mg(2+) serves as cofactor.

Its subcellular location is the carboxysome. It catalyses the reaction 2 (2R)-3-phosphoglycerate + 2 H(+) = D-ribulose 1,5-bisphosphate + CO2 + H2O. The catalysed reaction is D-ribulose 1,5-bisphosphate + O2 = 2-phosphoglycolate + (2R)-3-phosphoglycerate + 2 H(+). Functionally, ruBisCO catalyzes two reactions: the carboxylation of D-ribulose 1,5-bisphosphate, the primary event in carbon dioxide fixation, as well as the oxidative fragmentation of the pentose substrate in the photorespiration process. Both reactions occur simultaneously and in competition at the same active site. This Parasynechococcus marenigrum (strain WH8102) protein is Ribulose bisphosphate carboxylase large chain.